We begin with the raw amino-acid sequence, 410 residues long: 45 kDa immediate-early protein 2 (410 aa).

Residues 36 to 166 (SEEEQGEEVE…SKRISELDNE (131 aa)) form a disordered region. Low complexity-rich tracts occupy residues 47-67 (RGATASSPSTGSGTPRVTSPT), 90-101 (SSSSSSCSSASD), and 132-147 (AASSSLLSCGHQSSGG). The segment at 257-283 (VRCRLGTMCNLALSTPFLMEHTMPVTH) is a zinc-finger region.

In terms of biological role, activates the E1.7 promoter. This activation is augmented by the IE1 protein. It down-regulates the transcription of genes under the control of the major IE promoter. The polypeptide is 45 kDa immediate-early protein 2 (UL122) (Homo sapiens (Human)).